The sequence spans 1172 residues: DNA-directed RNA polymerase subunit beta (1172 aa).

It belongs to the RNA polymerase beta chain family. The RNAP catalytic core consists of 2 alpha, 1 beta, 1 beta' and 1 omega subunit. When a sigma factor is associated with the core the holoenzyme is formed, which can initiate transcription.

The catalysed reaction is RNA(n) + a ribonucleoside 5'-triphosphate = RNA(n+1) + diphosphate. Functionally, DNA-dependent RNA polymerase catalyzes the transcription of DNA into RNA using the four ribonucleoside triphosphates as substrates. The chain is DNA-directed RNA polymerase subunit beta from Mycobacterium sp. (strain JLS).